The primary structure comprises 135 residues: Large ribosomal subunit protein uL16c (135 aa).

It belongs to the universal ribosomal protein uL16 family. Part of the 50S ribosomal subunit.

It localises to the plastid. The protein resides in the chloroplast. This is Large ribosomal subunit protein uL16c from Ceratophyllum demersum (Rigid hornwort).